We begin with the raw amino-acid sequence, 187 residues long: Corticoliberin (187 aa).

Residues Met1–Ala24 form the signal peptide. A propeptide spanning residues Leu25 to Arg144 is cleaved from the precursor. The interval Ala75–His95 is disordered. Ile185 carries the post-translational modification Isoleucine amide.

The protein belongs to the sauvagine/corticotropin-releasing factor/urotensin I family. Interacts (via C-terminus) with CRFR1 (via N-terminal extracellular domain). Produced by the hypothalamus.

The protein resides in the secreted. Functionally, hormone regulating the release of corticotropin from pituitary gland. Induces NLRP6 in intestinal epithelial cells, hence may influence gut microbiota profile. The protein is Corticoliberin (Crh) of Rattus norvegicus (Rat).